A 229-amino-acid chain; its full sequence is Transmembrane protein 182 (229 aa).

The N-terminal stretch at 1-26 is a signal peptide; the sequence is MRLNIAIFFGALFGALGVLLFLVAFG. At 27–114 the chain is on the extracellular side; sequence SDYWLLATEV…SYDSAVIYRG (88 aa). Asparagine 47 carries N-linked (GlcNAc...) asparagine glycosylation. An interaction with ITGB1 region spans residues 49–59; that stretch reads TFHHEGFFWRC. N-linked (GlcNAc...) asparagine glycosylation occurs at asparagine 102. Residues 115 to 135 form a helical membrane-spanning segment; that stretch reads FWAVLMLLGVVAVVIASFLII. The Cytoplasmic segment spans residues 136 to 153; that stretch reads CAAPFASHFLYKAGGGSY. A helical membrane pass occupies residues 154 to 174; it reads IAAGILFSLVVMLYVIWVQAV. Residues 175–200 are Extracellular-facing; that stretch reads ADMESYRNMKMKDCLDFTPSVLYGWS. The chain crosses the membrane as a helical span at residues 201–221; it reads FFLAPAGIFFSLLAGLLFLVV. Residues 222–229 lie on the Cytoplasmic side of the membrane; that stretch reads GWHIQIHH.

The protein belongs to the TMEM182 family. Interacts with ITGB1.

It is found in the cell membrane. Functionally, negatively regulates myogenesis and skeletal muscle regeneration via its association with ITGB1. Modulates ITGB1 activation by decreasing ITGB1-LAMB1 interaction and inhibiting ITGB1-mediated intracellular signaling during myogenesis. This chain is Transmembrane protein 182 (TMEM182), found in Homo sapiens (Human).